A 57-amino-acid polypeptide reads, in one-letter code: Small hydrophobic protein (57 aa).

Residues 1 to 8 (MPLIQPPL) are Virion surface-facing. Residues 9-29 (YLTFLLLMLLYRIITLYVWSL) form a helical membrane-spanning segment. Topologically, residues 30-57 (STITYKTSVRHASLYQRSFFRWSVDHSL) are intravirion.

The protein belongs to the rubulavirus small hydrophobic protein family. As to quaternary structure, interacts with host TNFRSF1A, RIPK1 and IRAK1; these interactions interfere with host NF-kappa-B activation at the level of receptor complexes. Interacts with host protein UBQLN4.

The protein resides in the virion membrane. The protein localises to the host cell membrane. Its function is as follows. Plays a role in the inhibition of the host NF-kappa-B pathway. This inhibition occurs at the receptor level, by preventing the signaling of TNFR1 as well as IL-1R and TLR3. This chain is Small hydrophobic protein (SH), found in Homo sapiens (Human).